Consider the following 1935-residue polypeptide: Myosin heavy chain, fast skeletal muscle (1935 aa).

The Myosin N-terminal SH3-like domain occupies 32–81 (DAKTAFFVVDPDEMYLKGTLVSKEGGKATVKTHSGKTVTVKEDEIFPMNP). The region spanning 85–779 (DKIEDMAMMT…LLGALEEMRD (695 aa)) is the Myosin motor domain. Lys129 is modified (N6,N6,N6-trimethyllysine). 178–185 (GESGAGKT) contributes to the ATP binding site. Actin-binding regions lie at residues 659 to 681 (LMTN…ESKT) and 761 to 775 (HTKV…GALE). The region spanning 782-811 (LALLVTMTQALCRGYVMRKEFVKMMERRES) is the IQ domain. Residues 812–839 (IYSIQYNIRSFMNVKHWPWMKLYFKIKP) form a hinge region. A coiled-coil region spans residues 840–1935 (LLKSAETEKE…RDAGKSKDEE (1096 aa)). Disordered stretches follow at residues 1589-1608 (RNSQ…EVRS) and 1902-1935 (HELE…KDEE). The span at 1592-1603 (QRVIDSMQSTLD) shows a compositional bias: polar residues. Basic and acidic residues-rich tracts occupy residues 1902–1913 (HELEEAQERADV) and 1924–1935 (KSRDAGKSKDEE).

This sequence belongs to the TRAFAC class myosin-kinesin ATPase superfamily. Myosin family. Muscle myosin is a hexameric protein that consists of 2 heavy chain subunits (MHC), 2 alkali light chain subunits (MLC) and 2 regulatory light chain subunits (MLC-2).

It localises to the cytoplasm. The protein localises to the myofibril. In terms of biological role, muscle contraction. The sequence is that of Myosin heavy chain, fast skeletal muscle from Cyprinus carpio (Common carp).